The chain runs to 379 residues: Reducing end xylose-releasing exo-oligoxylanase (379 aa).

The active-site Proton donor is glutamate 66. The active-site Proton acceptor is aspartate 259.

It belongs to the glycosyl hydrolase 8 (cellulase D) family.

It catalyses the reaction Hydrolysis of (1-&gt;4)-beta-D-xylose residues from the reducing end of oligosaccharides.. Its function is as follows. Hydrolyzes xylooligosaccharides with a degree of polymerization of greater than or equal to 3, releasing xylose from the reducing end. Has low activity on birchwood xylan, oat spelt xylan and arabinoxylan. The chain is Reducing end xylose-releasing exo-oligoxylanase from Bifidobacterium adolescentis (strain ATCC 15703 / DSM 20083 / NCTC 11814 / E194a).